We begin with the raw amino-acid sequence, 720 residues long: Iron-sulfur clusters transporter ATM1, mitochondrial (720 aa).

The N-terminal 36 residues, 1-36, are a transit peptide targeting the mitochondrion; sequence MIMFRSLSVTPVWKAGLSLSHRSIPINSRLSSVRNY. The Mitochondrial matrix portion of the chain corresponds to 37–129; that stretch reads ISIGCANKTG…PSGDNKVKIR (93 aa). Over residues 64–77 the composition is skewed to polar residues; sequence RFNSSSNGNGTDKN. Residues 64-102 are disordered; sequence RFNSSSNGNGTDKNASVAPKTEVKKIVPPKPSTNGKSKT. Residues 130-151 traverse the membrane as a helical segment; it reads VLIALALLIGAKLLNVQVPFFF. The ABC transmembrane type-1 domain maps to 130 to 421; sequence VLIALALLIG…LGSVYRELKQ (292 aa). The Mitochondrial intermembrane portion of the chain corresponds to 152–175; the sequence is KQTIDSMNIEWGPDVATVLPVAIT. The helical transmembrane segment at 176 to 199 threads the bilayer; sequence MTILSYGAARFGAVMFGELRNAVF. The Mitochondrial matrix portion of the chain corresponds to 200 to 248; sequence AKVAQNAIRKVSLQTFQHLMKLDLGWHLSRQTGGLTRAMDRGTKGISYV. The chain crosses the membrane as a helical span at residues 249–272; the sequence is LSAMVFHMIPITFEISVVCGILTY. A topological domain (mitochondrial intermembrane) is located at residue Gln273. The helical transmembrane segment at 274–294 threads the bilayer; the sequence is FGSSFAAMTFVTMLLYSFFTF. Residues 295 to 360 lie on the Mitochondrial matrix side of the membrane; the sequence is KTTAWRTEFR…SQIKVAQSLA (66 aa). Residues 300 to 304 and 363 to 366 contribute to the glutathione site; these read RTEFR and NAGQ. The chain crosses the membrane as a helical span at residues 361-379; that stretch reads FLNAGQNFIFTSALTAMMY. The Mitochondrial intermembrane portion of the chain corresponds to 380–394; it reads MGASGVMEGALTVGD. A helical transmembrane segment spans residues 395–416; that stretch reads LVLINQLVFQLSVPLNFLGSVY. Glutathione is bound at residue Gly413. Residues 417–720 are Mitochondrial matrix-facing; that stretch reads RELKQSLIDM…EKEPRTSKKD (304 aa). Residues 456–692 enclose the ABC transporter domain; sequence IKFENVTFGY…PNSLYSELWN (237 aa). Residues Tyr465 and 489–500 each bind ATP; that span reads GPSGSGKSTILR.

It belongs to the ABC transporter superfamily. ABCB family. Heavy Metal importer (TC 3.A.1.210) subfamily. Homodimer.

The protein localises to the mitochondrion inner membrane. Performs an essential function in the generation of cytoplasmic iron-sulfur proteins by mediating the ATP-dependent export of Fe/S cluster precursors synthesized by NFS1 and other mitochondrial proteins. Hydrolyzes ATP. Binds glutathione and may function by transporting a glutathione-conjugated iron-sulfur compound. The chain is Iron-sulfur clusters transporter ATM1, mitochondrial from Kluyveromyces lactis (strain ATCC 8585 / CBS 2359 / DSM 70799 / NBRC 1267 / NRRL Y-1140 / WM37) (Yeast).